Consider the following 1120-residue polypeptide: Topless-related protein 1 (1120 aa).

The region spanning 4–36 is the LisH domain; that stretch reads LSRELVFLILQFLDEEKFKETVHKLEQESGFFF. The CTLH domain maps to 34–92; the sequence is FFFNMKYFEDEVHNGNWDEVEKYLSGFTKVDDNRYSMKIFFEIRKQKYLEALDRHDRPK. Disordered stretches follow at residues 210-235 and 283-307; these read ARAP…PLGA and HPRT…SKRT. Position 214 is a phosphoserine (Ser214). WD repeat units follow at residues 353 to 393, 415 to 454, 460 to 501, 504 to 545, 548 to 591, 595 to 634, 639 to 678, 699 to 745, 755 to 794, 822 to 860, 863 to 903, 906 to 945, 999 to 1038, and 1052 to 1091; these read SQGS…RLVQ, EPVV…DMRQ, AHVG…KRYT, GHEA…SRVD, APGR…VKRT, FHKR…LLTA, GGLQ…RLLH, ERPA…EPSQ, MRVT…RNAT, NPEE…TMAT, PPPP…VKSK, GHSK…KQKS, ESAA…LRCR, and SNVH…GKWG. Residues 1087–1120 are disordered; the sequence is EGKWGVAPPPENGSASAVTATPSVGASASDQPQR. Residues 1099-1120 are compositionally biased toward polar residues; it reads GSASAVTATPSVGASASDQPQR.

In terms of assembly, tetramer. Interacts with SNC1 (via TIR domain) and HDA19. Interacts with SPL (via EAR motif). Interacts with SPEAR3/TIE1. Binds to and corepresses GAF1/IDD2. Highly expressed in stamen primordium, microsporocyte, ovule primordium and megasporocyte during sporogenesis.

Its subcellular location is the nucleus. In terms of biological role, transcriptional corepressor. Activates TIR-NB-LRR R protein-mediated immune responses through repression of negative regulators such as CNGC2/DND1. Negative regulator of jasmonate responses. The sequence is that of Topless-related protein 1 (TPR1) from Arabidopsis thaliana (Mouse-ear cress).